We begin with the raw amino-acid sequence, 70 residues long: UPF0352 protein PBPRA2586 (70 aa).

Belongs to the UPF0352 family.

The chain is UPF0352 protein PBPRA2586 from Photobacterium profundum (strain SS9).